A 244-amino-acid chain; its full sequence is Fumarate reductase iron-sulfur subunit (244 aa).

Position 14 (Tyr14) interacts with a menaquinone. Residues 16-97 (PEVDTAPHSA…GMKVEALANF (82 aa)) enclose the 2Fe-2S ferredoxin-type domain. 4 residues coordinate [2Fe-2S] cluster: Cys58, Cys63, Cys66, and Cys78. The 4Fe-4S ferredoxin-type domain maps to 140–169 (MAKYHQFSGCINCGLCYAACPQFGLNPEFI). Positions 149, 152, and 155 each coordinate [4Fe-4S] cluster. [3Fe-4S] cluster-binding residues include Cys159, Cys205, and Cys211. A [4Fe-4S] cluster-binding site is contributed by Cys215. A menaquinone is bound at residue 226–229 (QQGK).

Belongs to the succinate dehydrogenase/fumarate reductase iron-sulfur protein family. Fumarate dehydrogenase forms part of an enzyme complex containing four subunits: a flavoprotein, an iron-sulfur, and two hydrophobic anchor proteins. Requires [2Fe-2S] cluster as cofactor. [3Fe-4S] cluster is required as a cofactor. [4Fe-4S] cluster serves as cofactor.

The protein localises to the cell inner membrane. It carries out the reaction a quinone + succinate = fumarate + a quinol. The enzyme catalyses a menaquinone + succinate = a menaquinol + fumarate. Functionally, two distinct, membrane-bound, FAD-containing enzymes are responsible for the catalysis of fumarate and succinate interconversion; the fumarate reductase is used in anaerobic growth, and the succinate dehydrogenase is used in aerobic growth. The chain is Fumarate reductase iron-sulfur subunit (frdB) from Escherichia coli O157:H7.